The sequence spans 125 residues: Small ribosomal subunit protein uS12 (125 aa).

Residues 1–28 (MPTISQLIGSERKRLTRKTKSPALKSCP) are disordered. Residue D89 is modified to 3-methylthioaspartic acid. A disordered region spans residues 104–125 (TAGVKDRRQSRSKYGAKAPKNN).

It belongs to the universal ribosomal protein uS12 family. In terms of assembly, part of the 30S ribosomal subunit. Contacts proteins S8 and S17. May interact with IF1 in the 30S initiation complex.

In terms of biological role, with S4 and S5 plays an important role in translational accuracy. Functionally, interacts with and stabilizes bases of the 16S rRNA that are involved in tRNA selection in the A site and with the mRNA backbone. Located at the interface of the 30S and 50S subunits, it traverses the body of the 30S subunit contacting proteins on the other side and probably holding the rRNA structure together. The combined cluster of proteins S8, S12 and S17 appears to hold together the shoulder and platform of the 30S subunit. The sequence is that of Small ribosomal subunit protein uS12 from Prochlorococcus marinus (strain MIT 9515).